We begin with the raw amino-acid sequence, 155 residues long: Short-chain-enoyl-CoA hydratase (155 aa).

The protein belongs to the enoyl-CoA hydratase/isomerase family.

It catalyses the reaction a short-chain (3S)-3-hydroxyacyl-CoA = a short-chain (2E)-enoyl-CoA + H2O. It participates in lipid metabolism; butanoate metabolism. This Clostridioides difficile (Peptoclostridium difficile) protein is Short-chain-enoyl-CoA hydratase (crt).